A 350-amino-acid chain; its full sequence is MIKKAIAKVVERIDLTEAEMIEVMDQIMSGGATPAQIAAFITALRMKGETVEEITGAARVMRDRATPIRVGKGVLDIDRDDINIDQETILDVVGTGGDGTNTFNISTTVSFVVASCGVKVAKHGNRAVSSACGSADVLESLGVNLDVTPETVEQAIAKIGIGFLFAPALHGAMKHAIGPRKEIGIRTIFNILGPLTNPAGADCQVLGVYREELVEPLARVLHKLGCRRGFVVHGMDGMDEITLTRETRIAEVTRDGVSVRTITPEEFGFASCPAGELRGGDAAGNARIVRGILEGATGPRRDVVLLNAAFGLVAAGKAVDPAEGVRIAAEAIDSGRALAKLEELITLTNE.

5-phospho-alpha-D-ribose 1-diphosphate is bound by residues Gly94, 97-98 (GD), Thr102, 104-107 (NIST), 122-130 (KHGNRAVSS), and Ser134. Gly94 contributes to the anthranilate binding site. Residue Ser106 participates in Mg(2+) binding. Asn125 provides a ligand contact to anthranilate. Arg180 is a binding site for anthranilate. Positions 239 and 240 each coordinate Mg(2+).

Belongs to the anthranilate phosphoribosyltransferase family. In terms of assembly, homodimer. The cofactor is Mg(2+).

The catalysed reaction is N-(5-phospho-beta-D-ribosyl)anthranilate + diphosphate = 5-phospho-alpha-D-ribose 1-diphosphate + anthranilate. It functions in the pathway amino-acid biosynthesis; L-tryptophan biosynthesis; L-tryptophan from chorismate: step 2/5. Its function is as follows. Catalyzes the transfer of the phosphoribosyl group of 5-phosphorylribose-1-pyrophosphate (PRPP) to anthranilate to yield N-(5'-phosphoribosyl)-anthranilate (PRA). In Geobacter sulfurreducens (strain ATCC 51573 / DSM 12127 / PCA), this protein is Anthranilate phosphoribosyltransferase.